The following is a 134-amino-acid chain: Small ribosomal subunit protein uS11 (134 aa).

It belongs to the universal ribosomal protein uS11 family. In terms of assembly, part of the 30S ribosomal subunit. Interacts with proteins S7 and S18. Binds to IF-3.

Its function is as follows. Located on the platform of the 30S subunit, it bridges several disparate RNA helices of the 16S rRNA. Forms part of the Shine-Dalgarno cleft in the 70S ribosome. The chain is Small ribosomal subunit protein uS11 from Variovorax paradoxus (strain S110).